The sequence spans 250 residues: uncharacterized protein (250 aa).

The signal sequence occupies residues Met-1–Ala-25.

This is an uncharacterized protein from Bacillus subtilis (strain 168).